The sequence spans 270 residues: Protein FAM110D (270 aa).

The segment covering 1-16 (MLLASPSTPSRGRTPS) has biased composition (low complexity). Disordered stretches follow at residues 1 to 83 (MLLA…RPDS), 117 to 142 (RDVASSSAGSSERPAAPGGWTAPQDA), and 186 to 244 (PQSW…QVSV). Basic residues predominate over residues 68–78 (RPARRGSGRRL).

Belongs to the FAM110 family.

This Bos taurus (Bovine) protein is Protein FAM110D (FAM110D).